Here is a 215-residue protein sequence, read N- to C-terminus: RxLR effector protein PITG_00582 (215 aa).

An N-terminal signal peptide occupies residues 1 to 19; that stretch reads MLPYKTLLLALGFFFTVQC. The RxLR-dEER motif lies at 39–51; sequence RLLRSPEKTDEER. Residues 81–149 adopt a coiled-coil conformation; it reads VAKQAKEMSN…QNELEKLAKQ (69 aa).

The protein belongs to the RxLR effector family.

The protein localises to the secreted. Its subcellular location is the host cell membrane. Effector that might be involved in host plant infection. The chain is RxLR effector protein PITG_00582 from Phytophthora infestans (strain T30-4) (Potato late blight agent).